A 57-amino-acid polypeptide reads, in one-letter code: Small ribosomal subunit protein eS31 (57 aa).

Residues Cys29, Cys32, Cys47, and Cys50 each contribute to the Zn(2+) site. A C4-type zinc finger spans residues 29-50; sequence CSRCGKGTYMSEHKDRNTCGKC.

Belongs to the eukaryotic ribosomal protein eS31 family. As to quaternary structure, part of the 30S ribosomal subunit. The cofactor is Zn(2+).

This Nitrosopumilus maritimus (strain SCM1) protein is Small ribosomal subunit protein eS31.